We begin with the raw amino-acid sequence, 122 residues long: Large ribosomal subunit protein uL14c (122 aa).

This sequence belongs to the universal ribosomal protein uL14 family. Part of the 50S ribosomal subunit.

It localises to the plastid. It is found in the chloroplast. In terms of biological role, binds to 23S rRNA. The sequence is that of Large ribosomal subunit protein uL14c from Gossypium barbadense (Sea Island cotton).